Reading from the N-terminus, the 388-residue chain is Translation initiation factor eIF2B subunit beta (388 aa).

The disordered stretch occupies residues 109-133; the sequence is DDFETTTSNNNNNNNNNNINSSSNI. Over residues 116-133 the composition is skewed to low complexity; that stretch reads SNNNNNNNNNNINSSSNI.

The protein belongs to the eIF-2B alpha/beta/delta subunits family. In terms of assembly, component of the translation initiation factor 2B (eIF2B) complex which is a heterodecamer of two sets of five different subunits: alpha, beta, gamma, delta and epsilon. Subunits alpha, beta and delta comprise a regulatory subcomplex and subunits epsilon and gamma comprise a catalytic subcomplex. Within the complex, the hexameric regulatory complex resides at the center, with the two heterodimeric catalytic subcomplexes bound on opposite sides.

Its subcellular location is the cytoplasm. The protein localises to the cytosol. Functionally, acts as a component of the translation initiation factor 2B (eIF2B) complex, which catalyzes the exchange of GDP for GTP on eukaryotic initiation factor 2 (eIF2) gamma subunit. Its guanine nucleotide exchange factor activity is repressed when bound to eIF2 complex phosphorylated on the alpha subunit, thereby limiting the amount of methionyl-initiator methionine tRNA available to the ribosome and consequently global translation is repressed. The sequence is that of Translation initiation factor eIF2B subunit beta (eif2b2) from Dictyostelium discoideum (Social amoeba).